The following is a 195-amino-acid chain: Interferon tau-2 (195 aa).

An N-terminal signal peptide occupies residues 1–23 (MAFVLSLLMALVLVSYGPGGSLG). Cystine bridges form between C24-C122 and C52-C162.

It belongs to the alpha/beta interferon family. IFN-alphaII subfamily. As to expression, constitutively and exclusively expressed in the mononuclear cells of the extraembryonic trophectoderm.

The protein localises to the secreted. Its function is as follows. Paracrine hormone primarily responsible for maternal recognition of pregnancy. Interacts with endometrial receptors, probably type I interferon receptors, and blocks estrogen receptor expression, preventing the estrogen-induced increase in oxytocin receptor expression in the endometrium. This results in the suppression of the pulsatile endometrial release of the luteolytic hormone prostaglandin F2-alpha, hindering the regression of the corpus luteum (luteolysis) and therefore a return to ovarian cyclicity. This, and a possible direct effect of IFN-tau on prostaglandin synthesis, leads in turn to continued ovarian progesterone secretion, which stimulates the secretion by the endometrium of the nutrients required for the growth of the conceptus. In summary, displays particularly high antiviral and antiproliferative potency concurrently with particular weak cytotoxicity, high antiluteolytic activity and immunomodulatory properties. In contrast with other IFNs, IFN-tau is not virally inducible. In Ovis aries (Sheep), this protein is Interferon tau-2 (IFNT2).